A 102-amino-acid polypeptide reads, in one-letter code: Urease subunit beta (102 aa).

It belongs to the urease beta subunit family. In terms of assembly, heterotrimer of UreA (gamma), UreB (beta) and UreC (alpha) subunits. Three heterotrimers associate to form the active enzyme.

Its subcellular location is the cytoplasm. It carries out the reaction urea + 2 H2O + H(+) = hydrogencarbonate + 2 NH4(+). The protein operates within nitrogen metabolism; urea degradation; CO(2) and NH(3) from urea (urease route): step 1/1. The polypeptide is Urease subunit beta (Trichodesmium erythraeum (strain IMS101)).